A 337-amino-acid polypeptide reads, in one-letter code: RAD51-associated protein 1 (337 aa).

Disordered regions lie at residues 1–69 (MVRP…PPKK) and 88–337 (LSVK…SQVR). Residues S19 and S23 each carry the phosphoserine modification. The span at 28-38 (ISSSTPVNKSK) shows a compositional bias: polar residues. The tract at residues 32 to 50 (TPVNKSKTVPKVLKQDKPK) is interaction with DNA. Positions 44–69 (LKQDKPKPNLKNLQKEEVLPTEPPKK) are enriched in basic and acidic residues. Phosphoserine occurs at positions 103 and 107. Residues 105 to 118 (EKSTDKQGKEKTEN) are compositionally biased toward basic and acidic residues. An SIM motif motif is present at residues 138-143 (LDKITE). Acidic residues predominate over residues 190–205 (SESDPDFDESKESDED). The interaction with DNA stretch occupies residues 225–286 (GEKKERKSKP…PSAESKRPKW (62 aa)). Residue K251 forms a Glycyl lysine isopeptide (Lys-Gly) (interchain with G-Cter in SUMO; alternate) linkage. K251 participates in a covalent cross-link: Glycyl lysine isopeptide (Lys-Gly) (interchain with G-Cter in ubiquitin; alternate). A WVPP motif motif is present at residues 286-289 (WVPP). Positions 290–304 (AASGSRNSSSNALAG) are enriched in low complexity. The interval 295–334 (RNSSSNALAGTPAKSPSQSLRLGLSRLAPVKRLHPSATSS) is interaction with RAD51. Residue S309 is modified to Phosphoserine.

Monomer; elongated monodisperse monomer. Interacts (via C-terminal region) with RAD51; the interaction is direct. Interacts (via SIM motif) with WDR48/UAF1; WDR48/UAF1 and RAD51AP1 cooperate together to stimulate RAD51-mediated homologous recombination (HR). Interacts (via WVPP motif) with DMC1; the interaction is direct. Interacts with PALB2. Interacts with RAD52. Sumoylation with SUMO2/3 by NSMCE2/MMS21 promotes stabilization, possibly by preventing ubiquitination. Most abundantly expressed in testis. Also expressed in spleen, thymus and bone marrow. Not detected in heart, kidney or liver.

Its subcellular location is the chromosome. It is found in the nucleus. The protein resides in the telomere. Functionally, structure-specific DNA-binding protein involved in DNA repair by promoting RAD51-mediated homologous recombination. Acts by stimulating D-Loop formation by RAD51: specifically enhances joint molecule formation through its structure-specific DNA interaction and its interaction with RAD51. Binds single-stranded DNA (ssDNA), double-stranded DNA (dsDNA) and secondary DNA structures, such as D-loop structures: has a strong preference for branched-DNA structures that are obligatory intermediates during joint molecule formation. Cooperates with WDR48/UAF1 to stimulate RAD51-mediated homologous recombination: both WDR48/UAF1 and RAD51AP1 have coordinated role in DNA-binding during homologous recombination and DNA repair. WDR48/UAF1 and RAD51AP1 also have a coordinated role in DNA-binding to promote USP1-mediated deubiquitination of FANCD2. Also involved in meiosis by promoting DMC1-mediated homologous meiotic recombination. This chain is RAD51-associated protein 1, found in Mus musculus (Mouse).